The following is a 152-amino-acid chain: Aspartate carbamoyltransferase regulatory chain (152 aa).

Positions 108, 113, 137, and 140 each coordinate Zn(2+).

The protein belongs to the PyrI family. Contains catalytic and regulatory chains. The cofactor is Zn(2+).

Its function is as follows. Involved in allosteric regulation of aspartate carbamoyltransferase. The protein is Aspartate carbamoyltransferase regulatory chain of Neisseria meningitidis serogroup A / serotype 4A (strain DSM 15465 / Z2491).